Reading from the N-terminus, the 1767-residue chain is MGGKNKQRTKGNLRPSNSGRAAELLAKEQGTVPGFIGFGTSHSDLGYVPAVQGAEDIDSLVDSDFRMVLRKLSKKDVTTKLKAMQEFGIMCTERDTEAVKGVLPYWPRIFCKISLDHDRRVREATQQAFEKLILKVKKHLAPYLKSVMGYWLMAQCDTYPPAALAAKDAFEAAFPPSKQPEAIAFCKEEITTVLQDHLLKETPDTLSDPQTVPEEEREAKFHRVVTCSLLALKRLLCFLPNNELDSLEEKFKSLLSQNKFWKYGKHSVPQVRSAYFELVSALCQHVPQVMKEEAAKVSPSVLLSIDDSDPVVCPALWEAVLYTLTTIEDCWFHVNAKKSVFPKLMAMIREGGRGLAAVMYPYLLPFISKLPQSITEPKLDFFKNFLTSLVTGLSTERTKSSSSECSAVISAFFECLRFIMQQNLGEEEMVQMLINEQLIPFIDTVLKDSGLHHGPMFDHLADTLSSWEAKADAERDPGAVYNLENVLLSFWGRLSEICTEKIRQPEADVKSVLCVSSLVGVLQRPRSSLKLHRKKTAQVRFAINIPEAHKGDEKSMSSEGENSEGSDGGAQSPLSNTSSDLVSPLRKKPLEDLVCKLAEVSISFVNERKSEQHLQFLSTLLDSFSSVQVFNILLSDKQKNVVKAKPLEITKLAEKNPAVKFLYHKLIGWLNDSQKEDGGFLVDILYSALRCCDSGVERKEVLDDLTKEDLKWSSLLQVIEKACSSSDKHALVTPWLKGSILGEKLVALADCLCDKDLEATTSESHSSEQWSLLRLALSQHVKNDYLIGEVYVGRIIVKLHETLSKTKDLSEAANSDSSVSFVCDVVHSFFSSAGGGLLMPPSEDLLLTLFQLCAQSKERTHLPDFLICKLKNTLLSGVNLLVHQTASTYEQSTFLRLSVLWLKDQVQSSALDNTSLQVLLSAAGDLLGTLVESEDTSLLGVYIGSVMPSDSEWEKMRQALPVQWLHRPLLEGRLSLNYECFKTDFKEQDTKTLPNHLCTSSLLSKMILVAQKKKLVLEDNVLEKIIAELLYSLQWCEELDNAPSFLSGFCGILQKMNITYSNLSVLSETSSLLQLLFDRSRKNGTLWSLIIAKLILSRSISSDEVKPYYKRKESFFPLTEGSLHTIQSLCPFLSKEEKKEFSAQCIPAFLGWTKEDLCSINGAFGHLAIFNSCLQTRSIDDKQLLHGILKIITSWRKQHEDIFLFSCNLSEASPEVLGLNIEIMRFLSLFLKHCAYPLPLADSEWDFIMCSMLAWLETTSENQALYSVPLVQLFACVSFDLACDLCAFFDSITPDIVDNLPVNLISEWKEFFSKGIHSLLLPLLVNAIGENKDLSETSFQNAMLKPMCETLTYISKDQLLSHKLPARLVASQKTNLPEHLQTLLNTLTPLLLFRARPVQIAAYHMLCKLMPELPQHDQDNLRSYGDEEEEPALSPPAALMSLLSSQEELLENVLGCVPVGQIVTVKPLSEDFCYVLGYLLTWKLILTFFKAASSQLRALYSMYLRKTKSLNKLLYHLFRLMPENPTYGETAIEVSSKDPKTFFTEEVQLSIRETATLPYHIPHLACSVYHMTLKDLPAMVRLWWNSSEKRVFNIVDRFTSKYVSNVLSFQEISSVQTSTQLFNGMTVKARATTREVMATYTIEDIVIELIIQLPSNYPLGSITVESGKRIGVAVQQWRNWMLQLSTYLTHQNGSIMEGLALWKNNVDKRFEGVEDCMICFSVIHGFNYSLPKKACRTCKKKFHSACLYKWFTSSNKSTCPLCRETFF.

HEAT repeat units lie at residues 59 to 96 (SLVD…ERDT), 100 to 138 (KGVL…KVKK), 273 to 314 (SAYF…VVCP), 335 to 372 (NAKK…KLPQ), 380 to 418 (DFFK…CLRF), 433 to 473 (LINE…KADA), and 509 to 547 (VKSV…NIPE). The tract at residues 550–583 (KGDEKSMSSEGENSEGSDGGAQSPLSNTSSDLVS) is disordered. Residues 572-581 (SPLSNTSSDL) show a composition bias toward polar residues. HEAT repeat units lie at residues 621 to 658 (LDSF…KNPA), 676 to 714 (EDGG…KWSS), 1067 to 1104 (SETS…SSDE), 1183 to 1226 (QLLH…IMRF), 1315 to 1353 (GIHS…TLTY), 1378 to 1415 (EHLQ…ELPQ), and 1476 to 1513 (LGYL…LNKL). The RING-type zinc-finger motif lies at 1716 to 1763 (CMICFSVIHGFNYSLPKKACRTCKKKFHSACLYKWFTSSNKSTCPLCR).

It belongs to the LTN1 family. As to quaternary structure, component of the ribosome quality control complex (RQC), composed of at least the E3 ubiquitin ligase LTN1 and NEMF associated with the 60S ribosomal subunit. The complex probably also contains TCF25 as well as VCP/p97 and its ubiquitin-binding cofactors. In terms of processing, autoubiquitinated. In terms of tissue distribution, widely expressed, including in the brain and spinal cord.

It is found in the cytoplasm. The protein resides in the cytosol. The catalysed reaction is S-ubiquitinyl-[E2 ubiquitin-conjugating enzyme]-L-cysteine + [acceptor protein]-L-lysine = [E2 ubiquitin-conjugating enzyme]-L-cysteine + N(6)-ubiquitinyl-[acceptor protein]-L-lysine.. It participates in protein modification; protein ubiquitination. In terms of biological role, E3 ubiquitin-protein ligase. component of the ribosome quality control complex (RQC), a ribosome-associated complex that mediates ubiquitination and extraction of incompletely synthesized nascent chains for proteasomal degradation. Within the RQC complex, LTN1 is recruited to stalled 60S ribosomal subunits by NEMF and mediates ubiquitination of stalled nascent chains. Ubiquitination leads to VCP/p97 recruitment for extraction and degradation of the incomplete translation product. The sequence is that of E3 ubiquitin-protein ligase listerin (Ltn1) from Mus musculus (Mouse).